The chain runs to 366 residues: Protein BIG GRAIN 1-like B (366 aa).

2 disordered regions span residues 42–73 (DSST…DFNR) and 129–148 (FERS…EHGS). Positions 56-73 (QNREDTRVSANRRDDFNR) are enriched in basic and acidic residues.

It belongs to the BIG GRAIN 1 (BG1) plant protein family.

The protein localises to the cell membrane. In terms of biological role, involved in auxin transport. Regulator of the auxin signaling pathway. This Arabidopsis thaliana (Mouse-ear cress) protein is Protein BIG GRAIN 1-like B.